The chain runs to 804 residues: Lon protease 2 (804 aa).

One can recognise a Lon N-terminal domain in the interval 6–199; that stretch reads MPVCPVRGSV…AVLVLLEAEL (194 aa). An ATP-binding site is contributed by 362-369; it reads GPPGVGKT. The Lon proteolytic domain occupies 598–779; that stretch reads EPQVGVATGM…DQVLDLALVG (182 aa). Active-site residues include S685 and K728.

Belongs to the peptidase S16 family. In terms of assembly, homohexamer. Organized in a ring with a central cavity.

The protein resides in the cytoplasm. It catalyses the reaction Hydrolysis of proteins in presence of ATP.. In terms of biological role, ATP-dependent serine protease that mediates the selective degradation of mutant and abnormal proteins as well as certain short-lived regulatory proteins. Required for cellular homeostasis and for survival from DNA damage and developmental changes induced by stress. Degrades polypeptides processively to yield small peptide fragments that are 5 to 10 amino acids long. Binds to DNA in a double-stranded, site-specific manner. The protein is Lon protease 2 of Thermus thermophilus (strain ATCC BAA-163 / DSM 7039 / HB27).